Here is a 36-residue protein sequence, read N- to C-terminus: Omega-agatoxin-Aa1b (36 aa).

This sequence belongs to the neurotoxin 04 (omega-agtx) family. 01 (type I omega-agtx) subfamily. As to expression, expressed by the venom gland.

Its subcellular location is the secreted. Omega-agatoxin are antagonist of voltage-gated calcium channels. They block insect neuromuscular transmission presynaptically. This toxin is a blocker of L-type calcium channels (Cav/CACNA1). In Agelenopsis aperta (North American funnel-web spider), this protein is Omega-agatoxin-Aa1b.